We begin with the raw amino-acid sequence, 478 residues long: Sphingomyelin synthase-related protein 1 (478 aa).

The span at M1–L22 shows a compositional bias: low complexity. The disordered stretch occupies residues M1–A65. In terms of domain architecture, SAM spans W75–I141. The next 6 membrane-spanning stretches (helical) occupy residues I216–V236, F264–L284, L295–L315, A341–F361, F385–H405, and I410–A430. At N431–G478 the chain is on the cytoplasmic side.

Belongs to the sphingomyelin synthase family. Expressed ubiquitously with highest levels in macrophages and testis.

It localises to the endoplasmic reticulum membrane. It carries out the reaction an N-acylsphing-4-enine + a 1,2-diacyl-sn-glycero-3-phosphoethanolamine = an N-acylsphing-4-enine 1-phosphoethanolamine + a 1,2-diacyl-sn-glycerol. The catalysed reaction is an N-acylsphinganine + a 1,2-diacyl-sn-glycero-3-phosphoethanolamine = an N-acylsphinganine-1-phosphoethanolamine + a 1,2-diacyl-sn-glycerol. The enzyme catalyses an N-acyl-(4R)-4-hydroxysphinganine + a 1,2-diacyl-sn-glycero-3-phosphoethanolamine = an N-acyl-(4R)-4-hydroxysphinganine-1-phosphoethanolamine + a 1,2-diacyl-sn-glycerol. It catalyses the reaction N-hexadecanoylsphinganine + a 1,2-diacyl-sn-glycero-3-phosphoethanolamine = N-hexadecanoyl-sphinganine-1-phosphoethanolamine + a 1,2-diacyl-sn-glycerol. It carries out the reaction N-hexadecanoyl-(4R)-hydroxysphinganine + a 1,2-diacyl-sn-glycero-3-phosphoethanolamine = N-hexadecanoyl-(4R)-hydroxysphinganine-1-phosphoethanolamine + a 1,2-diacyl-sn-glycerol. Its pathway is sphingolipid metabolism. Functionally, synthesizes sphingolipids through transfer of a phosphatidyl head group from a glycerophospholipid on to the primary hydroxyl of a ceramide in the lumen of the endoplasmic reticulum. Catalyzes the synthesis of ceramide phosphoethanolamines (CPEs) (such as N-acylsphing-4-enine 1-phosphoethanolamine) by transferring phosphoethanolamine head group, which is smaller and more hydrophilic than the phosphocholine (PC) headgroup transferred in the canonical sphingomyelin synthesis (SMS) reaction by SMS1 or SMS2, from a phosphatidylethanolamine (1,2-diacyl-sn-glycero-3-phosphoethanolamine, PE) to a ceramide (such as N-acylsphing-4-enine). The larger PC prevents an efficient fit in the enzyme's catalytic pocket, leading to little or no SMS activity. In vitro, in the absence of ceramide, it has PLC activity with preference for phosphatidylinositol and phosphatidic acid, but also hydrolyzes phosphatidylethanolamine. The protein is Sphingomyelin synthase-related protein 1 of Mus musculus (Mouse).